We begin with the raw amino-acid sequence, 346 residues long: Biotin synthase (346 aa).

In terms of domain architecture, Radical SAM core spans 38-256 (RQVQVSTLLS…IAVARIMMPT (219 aa)). [4Fe-4S] cluster-binding residues include cysteine 53, cysteine 57, and cysteine 60. Residues cysteine 97, cysteine 128, cysteine 188, and arginine 260 each coordinate [2Fe-2S] cluster.

It belongs to the radical SAM superfamily. Biotin synthase family. As to quaternary structure, homodimer. It depends on [4Fe-4S] cluster as a cofactor. The cofactor is [2Fe-2S] cluster.

The enzyme catalyses (4R,5S)-dethiobiotin + (sulfur carrier)-SH + 2 reduced [2Fe-2S]-[ferredoxin] + 2 S-adenosyl-L-methionine = (sulfur carrier)-H + biotin + 2 5'-deoxyadenosine + 2 L-methionine + 2 oxidized [2Fe-2S]-[ferredoxin]. The protein operates within cofactor biosynthesis; biotin biosynthesis; biotin from 7,8-diaminononanoate: step 2/2. In terms of biological role, catalyzes the conversion of dethiobiotin (DTB) to biotin by the insertion of a sulfur atom into dethiobiotin via a radical-based mechanism. This chain is Biotin synthase, found in Escherichia fergusonii (strain ATCC 35469 / DSM 13698 / CCUG 18766 / IAM 14443 / JCM 21226 / LMG 7866 / NBRC 102419 / NCTC 12128 / CDC 0568-73).